We begin with the raw amino-acid sequence, 410 residues long: Glycylpeptide N-tetradecanoyltransferase (410 aa).

Residues Phe30, Trp31, Phe162, Leu163, Cys164, Val165, Ser171, Arg173, Leu174, and Ala175 each coordinate tetradecanoyl-CoA.

Belongs to the NMT family. Heterodimer composed of NMT and AK2; AK2 myristoylation stabilizes the complex.

The protein resides in the cytoplasm. It catalyses the reaction N-terminal glycyl-[protein] + tetradecanoyl-CoA = N-tetradecanoylglycyl-[protein] + CoA + H(+). In terms of biological role, adds a myristoyl group to the N-terminal glycine residue of certain cellular proteins. Myristoylates adenylate kinase AK2. During the asexual blood stage, may myristoylate proteins such as ARO, CDPK1 and GAP45. Probably by mediating protein myristoylation, plays a role in the assembly of the inner membrane complex during the early stages of schizogony and in the formation of rhoptries in the late stages and thus merozoite egress. This is Glycylpeptide N-tetradecanoyltransferase from Plasmodium falciparum (isolate 3D7).